The primary structure comprises 966 residues: Integrator complex subunit 7 (966 aa).

Phosphoserine occurs at positions 338 and 809. The disordered stretch occupies residues 941–966; the sequence is LQQQAQQPLQPQPLPQPQPRSAYTRF.

It belongs to the Integrator subunit 7 family. As to quaternary structure, component of the Integrator complex, composed of core subunits INTS1, INTS2, INTS3, INTS4, INTS5, INTS6, INTS7, INTS8, INTS9/RC74, INTS10, INTS11/CPSF3L, INTS12, INTS13, INTS14 and INTS15. The core complex associates with protein phosphatase 2A subunits PPP2CA and PPP2R1A, to form the Integrator-PP2A (INTAC) complex. Interacts with NABP2.

It localises to the nucleus. The protein localises to the chromosome. It is found in the cytoplasm. Its function is as follows. Component of the integrator complex, a multiprotein complex that terminates RNA polymerase II (Pol II) transcription in the promoter-proximal region of genes. The integrator complex provides a quality checkpoint during transcription elongation by driving premature transcription termination of transcripts that are unfavorably configured for transcriptional elongation: the complex terminates transcription by (1) catalyzing dephosphorylation of the C-terminal domain (CTD) of Pol II subunit POLR2A/RPB1 and SUPT5H/SPT5, (2) degrading the exiting nascent RNA transcript via endonuclease activity and (3) promoting the release of Pol II from bound DNA. The integrator complex is also involved in terminating the synthesis of non-coding Pol II transcripts, such as enhancer RNAs (eRNAs), small nuclear RNAs (snRNAs), telomerase RNAs and long non-coding RNAs (lncRNAs). May be not involved in the recruitment of cytoplasmic dynein to the nuclear envelope by different components of the INT complex. Plays a role in DNA damage response (DDR) signaling during the S phase. The polypeptide is Integrator complex subunit 7 (Ints7) (Mus musculus (Mouse)).